The primary structure comprises 155 residues: Ribosomal RNA large subunit methyltransferase H (155 aa).

S-adenosyl-L-methionine-binding positions include Leu72, Gly103, and 122–127; that span reads LSDLTL.

It belongs to the RNA methyltransferase RlmH family. Homodimer.

It is found in the cytoplasm. The enzyme catalyses pseudouridine(1915) in 23S rRNA + S-adenosyl-L-methionine = N(3)-methylpseudouridine(1915) in 23S rRNA + S-adenosyl-L-homocysteine + H(+). In terms of biological role, specifically methylates the pseudouridine at position 1915 (m3Psi1915) in 23S rRNA. This is Ribosomal RNA large subunit methyltransferase H from Polaromonas naphthalenivorans (strain CJ2).